The chain runs to 165 residues: Iron sulfur cluster assembly protein 1, mitochondrial (165 aa).

A mitochondrion-targeting transit peptide spans 1–27 (MLPVITRFARPALMAIRPVNAMGVLRA). The SSQ1 binding region stretch occupies residues 132–136 (LPPVK).

The protein belongs to the NifU family. As to quaternary structure, homodimer, but can exist as monomers or trimers. Oligomerization may be regulated by Zn(2+) availability. Component of the core Fe-S cluster (ISC) assembly machinery. Interacts with YFH1/frataxin with a 1 to 1 stoichiometry; the interaction is direct. Interacts with the mitochondrial co-chaperones JAC1 and SSQ1. Interacts with NFS1. Interacts with YAH1/ferredoxin; interacts with the reduced form. Requires [2Fe-2S] cluster as cofactor. It depends on Zn(2+) as a cofactor.

The protein resides in the mitochondrion matrix. Its pathway is cofactor biosynthesis; iron-sulfur cluster biosynthesis. Its function is as follows. Scaffold protein for the de novo synthesis of iron-sulfur (Fe-S) clusters within mitochondria, which is required for maturation of both mitochondrial and cytoplasmic [2Fe-2S] and [4Fe-4S] proteins. First, a [2Fe-2S] cluster is transiently assembled on the scaffold proteins ISU1 and ISU2. In a second step, the cluster is released from ISU1/ISU2, transferred to glutaredoxin GRX5, followed by the formation of mitochondrial [2Fe-2S] proteins, the synthesis of [4Fe-4S] clusters and their target-specific insertion into the recipient apoproteins. Cluster assembly on ISU1/ISU2 depends on the function of the cysteine desulfurase complex NFS1-ISD11, which serves as the sulfur donor for cluster synthesis, the iron-binding protein frataxin (YFH1) as the putative iron donor, and the electron transfer chain comprised of ferredoxin reductase ARH1 and ferredoxin YAH1, which receive their electrons from NADH. Fe-S cluster release from ISU1/ISU2 is achieved by interaction with the Hsp70 chaperone SSQ1, assisted by the DnaJ-like co-chaperone JAC1 and the nucleotide exchange factor MGE1. ISU1 is the major isoform in yeast, while ISU2 is not detectable in cells grown to stationary phase. Also involved in production of a sulfur precursor required for thiolation of cytoplasmic tRNAs. The chain is Iron sulfur cluster assembly protein 1, mitochondrial from Saccharomyces cerevisiae (strain ATCC 204508 / S288c) (Baker's yeast).